Here is a 365-residue protein sequence, read N- to C-terminus: Putative DNA-directed RNA polymerase subunit alpha-like 3 (365 aa).

This sequence belongs to the RNA polymerase alpha chain family. As to quaternary structure, in plastids the minimal PEP RNA polymerase catalytic core is composed of four subunits: alpha, beta, beta', and beta''. When a (nuclear-encoded) sigma factor is associated with the core the holoenzyme is formed, which can initiate transcription.

The protein resides in the plastid. It is found in the chloroplast. It catalyses the reaction RNA(n) + a ribonucleoside 5'-triphosphate = RNA(n+1) + diphosphate. Its function is as follows. DNA-dependent RNA polymerase catalyzes the transcription of DNA into RNA using the four ribonucleoside triphosphates as substrates. This chain is Putative DNA-directed RNA polymerase subunit alpha-like 3 (rpoAL3-A), found in Pelargonium hortorum (Common geranium).